Reading from the N-terminus, the 823-residue chain is Sphingomyelin phosphodiesterase 4 (823 aa).

2 positions are modified to phosphoserine: serine 130 and serine 245. Threonine 665 carries the phosphothreonine modification. Serine 749 carries the post-translational modification Phosphoserine. The chain crosses the membrane as a helical span at residues 776–796; the sequence is LLLLLMAFFVASLFCIGPLSC.

Mg(2+) is required as a cofactor. As to expression, expressed in skeletal muscle (at protein level). In terms of tissue distribution, expressed in skeletal muscle but a lower levels than isoform 1 (at protein level).

It is found in the endoplasmic reticulum membrane. The protein localises to the golgi apparatus membrane. It localises to the nucleus envelope. Its subcellular location is the cell membrane. The protein resides in the sarcolemma. It carries out the reaction a sphingomyelin + H2O = phosphocholine + an N-acylsphing-4-enine + H(+). With respect to regulation, activated by phosphatidylserine and tumor necrosis factor (TNF). Inhibited by scyphostatin. Catalyzes the hydrolysis of membrane sphingomyelin to form phosphorylcholine and ceramide. It has a relevant role in the homeostasis of membrane sphingolipids, thereby influencing membrane integrity, and endoplasmic reticulum organization and function. May sensitize cells to DNA damage-induced apoptosis. In skeletal muscle, mediates TNF-stimulated oxidant production. The polypeptide is Sphingomyelin phosphodiesterase 4 (Smpd4) (Mus musculus (Mouse)).